The primary structure comprises 765 residues: Zinc metalloproteinase nas-37 (765 aa).

A signal peptide spans 1–22; sequence MKSQACLKVCLALIGLVSIVST. Positions 23–114 are excised as a propeptide; sequence AYIANDVVSD…SESNSPRSRR (92 aa). One can recognise a Peptidase M12A domain in the interval 115–308; sequence QAHPDPRNFW…AKMINTRYCS (194 aa). An N-linked (GlcNAc...) asparagine glycan is attached at Asn126. 6 disulfide bridges follow: Cys156–Cys307, Cys177–Cys196, Cys311–Cys331, Cys333–Cys342, Cys350–Cys374, and Cys400–Cys420. Zn(2+) is bound at residue His204. Glu205 is an active-site residue. Residues His208 and His214 each coordinate Zn(2+). Residues 303–343 form the EGF-like domain; it reads NTRYCSNVCQRSLPCLNEGYTDPNNCGRCRCPSGYGGTYCE. In terms of domain architecture, CUB spans 350–458; the sequence is CGGSLTASSS…RGFTLKYRAI (109 aa). The tract at residues 513–573 is disordered; that stretch reads KYSSEELYDP…TRPTPTTTVA (61 aa). Composition is skewed to low complexity over residues 526-545 and 562-573; these read LSPSSSSASPALLLPSDASP and ALTRPTPTTTVA. One can recognise a TSP type-1 domain in the interval 576–627; the sequence is TASWSAWGEWSACSQPCGGCGTKTRVRACYGGNQVCPGSNLDRESCNAHACA. Intrachain disulfides connect Cys588–Cys621, Cys592–Cys626, and Cys604–Cys611.

Zn(2+) is required as a cofactor. In terms of tissue distribution, expressed in hypodermal cells. Not expressed in the seam cells in L1 to L3 larvae, but it is present in seam cells of L4 larvae. Also expressed in attachment points of the cuticle at the anterior end of larvae, in the arcade cells in the mouth, the anterior pharynx, the amphid socket cells, and in the rectal epithelial cells at the posterior end of the larvae (at protein level).

Its subcellular location is the secreted. Metalloprotease. Plays an essential role in molting, a process during larval stages in which a new cuticle is formed and the old cuticle is shed. Required during ecdysis, the opening of the cuticle to allow the worm to escape. The chain is Zinc metalloproteinase nas-37 (nas-37) from Caenorhabditis elegans.